Consider the following 357-residue polypeptide: GTPase Obg (357 aa).

In terms of domain architecture, Obg spans 1–159 (MKFVDEAEIQ…RTLKLELKLL (159 aa)). The OBG-type G domain occupies 160-343 (ADIGMLGFPN…IMKSAMTLFE (184 aa)). GTP-binding positions include 166-173 (GFPNVGKS), 191-195 (FTTLY), 213-216 (DVPG), 293-296 (NKAD), and 324-326 (SAV). The Mg(2+) site is built by S173 and T193.

This sequence belongs to the TRAFAC class OBG-HflX-like GTPase superfamily. OBG GTPase family. As to quaternary structure, monomer. Mg(2+) is required as a cofactor.

The protein resides in the cytoplasm. An essential GTPase which binds GTP, GDP and possibly (p)ppGpp with moderate affinity, with high nucleotide exchange rates and a fairly low GTP hydrolysis rate. Plays a role in control of the cell cycle, stress response, ribosome biogenesis and in those bacteria that undergo differentiation, in morphogenesis control. The polypeptide is GTPase Obg (Xylella fastidiosa (strain M12)).